We begin with the raw amino-acid sequence, 538 residues long: Cytochrome P450 52A4 (538 aa).

Residues 27–46 form a helical membrane-spanning segment; sequence WYILIPTILLTLNFLSILHT. Position 485 (cysteine 485) interacts with heme.

This sequence belongs to the cytochrome P450 family. Heme is required as a cofactor.

It localises to the membrane. In terms of biological role, together with an NADPH cytochrome P450 the enzyme system catalyzes the terminal hydroxylation as the first step in the assimilation of alkanes and fatty acids. In Candida maltosa (Yeast), this protein is Cytochrome P450 52A4 (CYP52A4).